We begin with the raw amino-acid sequence, 328 residues long: Tetraacyldisaccharide 4'-kinase (328 aa).

55 to 62 is a binding site for ATP; that stretch reads TAGGNGKT.

Belongs to the LpxK family.

It carries out the reaction a lipid A disaccharide + ATP = a lipid IVA + ADP + H(+). It functions in the pathway glycolipid biosynthesis; lipid IV(A) biosynthesis; lipid IV(A) from (3R)-3-hydroxytetradecanoyl-[acyl-carrier-protein] and UDP-N-acetyl-alpha-D-glucosamine: step 6/6. Functionally, transfers the gamma-phosphate of ATP to the 4'-position of a tetraacyldisaccharide 1-phosphate intermediate (termed DS-1-P) to form tetraacyldisaccharide 1,4'-bis-phosphate (lipid IVA). This Escherichia coli O7:K1 (strain IAI39 / ExPEC) protein is Tetraacyldisaccharide 4'-kinase.